Reading from the N-terminus, the 383-residue chain is Cathepsin D (383 aa).

Residues 1–18 (MKLLILTLFLATIVLAQA) form the signal peptide. A propeptide spanning residues 19 to 48 (LTVPLNFHQASRESRRRVPQKWSNRLSALN) is cleaved from the precursor. The Peptidase A1 domain maps to 63 to 378 (YYGAITIGTP…DFGNKQVGFA (316 aa)). Asp-81 is an active-site residue. The cysteines at positions 94 and 101 are disulfide-linked. Asn-118 and Asn-238 each carry an N-linked (GlcNAc...) asparagine glycan. The cysteines at positions 259 and 263 are disulfide-linked. Asp-268 is a catalytic residue. A disulfide bond links Cys-302 and Cys-339. Asn-310 is a glycosylation site (N-linked (GlcNAc...) asparagine).

It belongs to the peptidase A1 family. Monomer. Post-translationally, N-glycosylated on 2 out of the 3 potential sites. Glycans contain sulfated Mannose.

The protein localises to the lysosome. The protein resides in the secreted. The enzyme catalyses Specificity similar to, but narrower than, that of pepsin A. Does not cleave the 4-Gln-|-His-5 bond in B chain of insulin.. Protease that may act during cell growth and/or development. The sequence is that of Cathepsin D (ctsD) from Dictyostelium discoideum (Social amoeba).